Reading from the N-terminus, the 520-residue chain is Cobalt-zinc-cadmium resistance protein CzcB (520 aa).

Residues 9–29 (AAIAAIVLVGGVATGGVLLSG) traverse the membrane as a helical segment. A disordered region spans residues 28–85 (SGRSAPEEQGGHSESKGHGDTEHHGKQAAEADHKDDKSHGDGEHHEVKKGPNGGALFS). Residues 32–76 (APEEQGGHSESKGHGDTEHHGKQAAEADHKDDKSHGDGEHHEVKK) show a composition bias toward basic and acidic residues. Positions 286 to 320 (EQKISAEQDYLSARNALQEAQISVQNAQQKLTAIG) form a coiled coil.

This sequence belongs to the membrane fusion protein (MFP) (TC 8.A.1) family.

It localises to the cell inner membrane. Functionally, czcA and CzcB together would act in zinc efflux nearly as effectively as the complete czc efflux system (CzcABC). The CzcB protein is thought to funnel zinc cations to the CzcA transport protein. This Cupriavidus metallidurans (strain ATCC 43123 / DSM 2839 / NBRC 102507 / CH34) (Ralstonia metallidurans) protein is Cobalt-zinc-cadmium resistance protein CzcB (czcB).